Consider the following 170-residue polypeptide: MDLKSLIRDIPDFPKPGILFRDITTLLQNPDGLRYVIDQFTEDYREQSIDYVVGIESRGFIFGAPLAYQLGAGFVPVRKPGKLPAAIHAQEYELEYGTDRLEIHQDACPAGSRVLVVDDLLATGGTAAATAQLLAPLNCTLVGFGFIIELTGLAGRQKLPDCHINALVEY.

This sequence belongs to the purine/pyrimidine phosphoribosyltransferase family. As to quaternary structure, homodimer.

The protein resides in the cytoplasm. It catalyses the reaction AMP + diphosphate = 5-phospho-alpha-D-ribose 1-diphosphate + adenine. The protein operates within purine metabolism; AMP biosynthesis via salvage pathway; AMP from adenine: step 1/1. Catalyzes a salvage reaction resulting in the formation of AMP, that is energically less costly than de novo synthesis. The sequence is that of Adenine phosphoribosyltransferase from Acaryochloris marina (strain MBIC 11017).